A 296-amino-acid chain; its full sequence is tRNA dimethylallyltransferase (296 aa).

9–16 (GPTAVGKT) contributes to the ATP binding site. 11 to 16 (TAVGKT) contacts substrate. Positions 34 to 37 (DSRQ) are interaction with substrate tRNA.

It belongs to the IPP transferase family. As to quaternary structure, monomer. The cofactor is Mg(2+).

The enzyme catalyses adenosine(37) in tRNA + dimethylallyl diphosphate = N(6)-dimethylallyladenosine(37) in tRNA + diphosphate. Functionally, catalyzes the transfer of a dimethylallyl group onto the adenine at position 37 in tRNAs that read codons beginning with uridine, leading to the formation of N6-(dimethylallyl)adenosine (i(6)A). This Chloroflexus aurantiacus (strain ATCC 29366 / DSM 635 / J-10-fl) protein is tRNA dimethylallyltransferase.